The chain runs to 121 residues: Small ribosomal subunit protein uS13 (121 aa).

The disordered stretch occupies residues 91 to 121 (HRRGLPVRGQKTKNNARTRKGPVKTVANKKK).

The protein belongs to the universal ribosomal protein uS13 family. Part of the 30S ribosomal subunit. Forms a loose heterodimer with protein S19. Forms two bridges to the 50S subunit in the 70S ribosome.

Located at the top of the head of the 30S subunit, it contacts several helices of the 16S rRNA. In the 70S ribosome it contacts the 23S rRNA (bridge B1a) and protein L5 of the 50S subunit (bridge B1b), connecting the 2 subunits; these bridges are implicated in subunit movement. Contacts the tRNAs in the A and P-sites. The chain is Small ribosomal subunit protein uS13 from Staphylococcus epidermidis (strain ATCC 35984 / DSM 28319 / BCRC 17069 / CCUG 31568 / BM 3577 / RP62A).